The primary structure comprises 543 residues: CTP synthase (543 aa).

Residues 1 to 265 (MTKFIFVTGG…DRLVTDRFRI (265 aa)) are amidoligase domain. Residue Ser13 coordinates CTP. Ser13 contributes to the UTP binding site. ATP is bound by residues 14–19 (SLGKGI) and Asp71. Mg(2+)-binding residues include Asp71 and Glu139. CTP is bound by residues 146–148 (DIE), 186–191 (KTKPTQ), and Lys222. UTP contacts are provided by residues 186–191 (KTKPTQ) and Lys222. A Glutamine amidotransferase type-1 domain is found at 290–541 (EIAMVGKYVD…VEAASQHKQT (252 aa)). Gly351 is a binding site for L-glutamine. Residue Cys378 is the Nucleophile; for glutamine hydrolysis of the active site. Residues 379-382 (LGMQ), Glu402, and Arg469 contribute to the L-glutamine site. Catalysis depends on residues His514 and Glu516.

This sequence belongs to the CTP synthase family. Homotetramer.

The catalysed reaction is UTP + L-glutamine + ATP + H2O = CTP + L-glutamate + ADP + phosphate + 2 H(+). It catalyses the reaction L-glutamine + H2O = L-glutamate + NH4(+). The enzyme catalyses UTP + NH4(+) + ATP = CTP + ADP + phosphate + 2 H(+). Its pathway is pyrimidine metabolism; CTP biosynthesis via de novo pathway; CTP from UDP: step 2/2. With respect to regulation, allosterically activated by GTP, when glutamine is the substrate; GTP has no effect on the reaction when ammonia is the substrate. The allosteric effector GTP functions by stabilizing the protein conformation that binds the tetrahedral intermediate(s) formed during glutamine hydrolysis. Inhibited by the product CTP, via allosteric rather than competitive inhibition. Functionally, catalyzes the ATP-dependent amination of UTP to CTP with either L-glutamine or ammonia as the source of nitrogen. Regulates intracellular CTP levels through interactions with the four ribonucleotide triphosphates. This is CTP synthase from Hydrogenovibrio crunogenus (strain DSM 25203 / XCL-2) (Thiomicrospira crunogena).